The following is a 149-amino-acid chain: Transcriptional repressor NrdR (149 aa).

A zinc finger lies at 3-34 (CPFCDTEETKVIDSRLVSDGYQVRRRRECGHC). An ATP-cone domain is found at 49 to 139 (PKIIKTDGTR…VYLSFDDIDQ (91 aa)).

Belongs to the NrdR family. Zn(2+) is required as a cofactor.

In terms of biological role, negatively regulates transcription of bacterial ribonucleotide reductase nrd genes and operons by binding to NrdR-boxes. In Haemophilus influenzae (strain PittEE), this protein is Transcriptional repressor NrdR.